Reading from the N-terminus, the 460-residue chain is tRNA modification GTPase MnmE (460 aa).

The (6S)-5-formyl-5,6,7,8-tetrahydrofolate site is built by Arg22, Glu87, and Arg126. The TrmE-type G domain occupies 222–381; it reads GLKTAIIGKP…LENTIYNLVF (160 aa). Residue Asn232 coordinates K(+). Residues 232–237, 251–257, and 276–279 each bind GTP; these read NVGKSS, TDIPGTT, and DTAG. Ser236 is a binding site for Mg(2+). K(+) is bound by residues Thr251, Ile253, and Thr256. Thr257 lines the Mg(2+) pocket. Lys460 is a binding site for (6S)-5-formyl-5,6,7,8-tetrahydrofolate.

This sequence belongs to the TRAFAC class TrmE-Era-EngA-EngB-Septin-like GTPase superfamily. TrmE GTPase family. As to quaternary structure, homodimer. Heterotetramer of two MnmE and two MnmG subunits. It depends on K(+) as a cofactor.

It is found in the cytoplasm. Exhibits a very high intrinsic GTPase hydrolysis rate. Involved in the addition of a carboxymethylaminomethyl (cmnm) group at the wobble position (U34) of certain tRNAs, forming tRNA-cmnm(5)s(2)U34. This Thermoanaerobacter sp. (strain X514) protein is tRNA modification GTPase MnmE.